Here is an 823-residue protein sequence, read N- to C-terminus: Nuclear pore complex protein Nup93-1 (823 aa).

The protein belongs to the nucleoporin interacting component (NIC) family. As to quaternary structure, part of the nuclear pore complex (NPC). Interacts with msk (via C-terminus); this association might be facilitated by Nup75. Interacts with Mad (preferentially when phosphorylated). Interacts with Nup154 (via N-terminus). Interacts with the Polycomb group (PcG) proteins Pc and E(z).

It localises to the nucleus membrane. It is found in the nucleus. The protein resides in the nuclear pore complex. Its subcellular location is the nucleoplasm. In terms of biological role, required for nuclear pore complex assembly, maintenance and function. Required for nuclear import of phosphorylated Mad via importin msk. Has no role in classical nuclear localization signal (cNLS)-dependent nuclear import via importin-beta. Mediates the association between the nuclear pore complex and a subclass of silenced regions bound by Polycomb group (PcG) proteins, enables long-range interactions between Polycomb loci and contributes to repression of polycomb targets. Together with Nup62 and Nup154, contributes to karyosome morphology and chromatin organization including attachment to the nuclear envelope in oocytes and nurse cells. This Drosophila melanogaster (Fruit fly) protein is Nuclear pore complex protein Nup93-1.